The following is a 429-amino-acid chain: MKTSILILAAGLGTRMKSQKPKVLQELCQKSMILHILKKAFALSDDVSVVLSHQKERVEKEILEYFPKTQILEQDLQNYPGTAGALRGFEPKNERVLILCGDMPLVEQTSLEALLSNNAKLNLAVFKARDPKSYGRVVIKNDSVEKIVEFKDANTQEKEINTCNAGVYVIDSRLLKELLPLIDNNNAAKEYYLTDIVKLAKEKDVMIKAVFVDEDEFMGINDKFELSIAENFMQEKIKKYWMQQGVIFHLPQSTFIGTDVEFMGECEVYENVRIEGKSKIINSIIKSSSVIENSIVENSDVGPLAHLRPNCELKNTHIGNFVECKNAKLNTVKAGHLSYLGDCEIDSGTNIGCGTITCNYDGVKKHKTIIGKNVFVGSDTQFIAPVKIEDEVIIAAGSTVSVNVEKGALFINRAEHKMIKDYYYKKFQK.

The segment at Met1 to Lys223 is pyrophosphorylase. Residues Leu8 to Gly11, Lys22, and Gly81 to Thr82 each bind UDP-N-acetyl-alpha-D-glucosamine. Position 102 (Asp102) interacts with Mg(2+). UDP-N-acetyl-alpha-D-glucosamine-binding residues include Gly135, Glu149, Asn164, and Asn221. Asn221 contributes to the Mg(2+) binding site. The segment at Phe224–Gln244 is linker. The segment at Gly245–Lys429 is N-acetyltransferase. Arg308 and Lys325 together coordinate UDP-N-acetyl-alpha-D-glucosamine. His336 functions as the Proton acceptor in the catalytic mechanism. Residues Tyr339 and Asn350 each contribute to the UDP-N-acetyl-alpha-D-glucosamine site. Acetyl-CoA contacts are provided by residues Asn359–Tyr360, Ser378, Ala396, and Arg413.

This sequence in the N-terminal section; belongs to the N-acetylglucosamine-1-phosphate uridyltransferase family. It in the C-terminal section; belongs to the transferase hexapeptide repeat family. Homotrimer. Mg(2+) serves as cofactor.

It is found in the cytoplasm. It catalyses the reaction alpha-D-glucosamine 1-phosphate + acetyl-CoA = N-acetyl-alpha-D-glucosamine 1-phosphate + CoA + H(+). The catalysed reaction is N-acetyl-alpha-D-glucosamine 1-phosphate + UTP + H(+) = UDP-N-acetyl-alpha-D-glucosamine + diphosphate. It participates in nucleotide-sugar biosynthesis; UDP-N-acetyl-alpha-D-glucosamine biosynthesis; N-acetyl-alpha-D-glucosamine 1-phosphate from alpha-D-glucosamine 6-phosphate (route II): step 2/2. Its pathway is nucleotide-sugar biosynthesis; UDP-N-acetyl-alpha-D-glucosamine biosynthesis; UDP-N-acetyl-alpha-D-glucosamine from N-acetyl-alpha-D-glucosamine 1-phosphate: step 1/1. The protein operates within bacterial outer membrane biogenesis; LPS lipid A biosynthesis. Its function is as follows. Catalyzes the last two sequential reactions in the de novo biosynthetic pathway for UDP-N-acetylglucosamine (UDP-GlcNAc). The C-terminal domain catalyzes the transfer of acetyl group from acetyl coenzyme A to glucosamine-1-phosphate (GlcN-1-P) to produce N-acetylglucosamine-1-phosphate (GlcNAc-1-P), which is converted into UDP-GlcNAc by the transfer of uridine 5-monophosphate (from uridine 5-triphosphate), a reaction catalyzed by the N-terminal domain. The protein is Bifunctional protein GlmU of Campylobacter jejuni subsp. jejuni serotype O:6 (strain 81116 / NCTC 11828).